Reading from the N-terminus, the 192-residue chain is Anthranilate synthase component 2 (192 aa).

In terms of domain architecture, Glutamine amidotransferase type-1 spans 3 to 192 (DILLLDNIDS…LEQTLAWALA (190 aa)). 57–59 (GPG) lines the L-glutamine pocket. Cysteine 84 serves as the catalytic Nucleophile; for GATase activity. L-glutamine contacts are provided by residues glutamine 88 and 134–135 (SL). Active-site for GATase activity residues include histidine 170 and glutamate 172.

Heterotetramer consisting of two non-identical subunits: a beta subunit (TrpG) and a large alpha subunit (TrpE).

It carries out the reaction chorismate + L-glutamine = anthranilate + pyruvate + L-glutamate + H(+). It functions in the pathway amino-acid biosynthesis; L-tryptophan biosynthesis; L-tryptophan from chorismate: step 1/5. Part of a heterotetrameric complex that catalyzes the two-step biosynthesis of anthranilate, an intermediate in the biosynthesis of L-tryptophan. In the first step, the glutamine-binding beta subunit (TrpG) of anthranilate synthase (AS) provides the glutamine amidotransferase activity which generates ammonia as a substrate that, along with chorismate, is used in the second step, catalyzed by the large alpha subunit of AS (TrpE) to produce anthranilate. In the absence of TrpG, TrpE can synthesize anthranilate directly from chorismate and high concentrations of ammonia. This chain is Anthranilate synthase component 2 (trpG), found in Yersinia pestis.